The primary structure comprises 296 residues: MSLYENKKVVAIGGGHGLGRMLAALKVFGSNATGIVTTTDNGGSTGRIRHCQGGIAWGDTRNCINQLITEPSISSMMFEYRFKGAGELNGHNLGNLMLTALDNLSVRPLDAINLIRNMLKVDVNILPMSEHPSDLAALAMDGKWVTGETSVDEMTQDLRRLDLAPEVPATKEAVTAIQDADCVILGPGSFLTSVMPPLLLPELGKAIARNQTAKVIFVENLSPEYGPAGRMSLEQKLEWCERACQGRKIDVVLGHHPHPELEQRWNFVTRDLASANRDWRHDRQKLRQAIEEQLMN.

It belongs to the gluconeogenesis factor family.

The protein localises to the cytoplasm. Required for morphogenesis under gluconeogenic growth conditions. This Vibrio cholerae serotype O1 (strain ATCC 39315 / El Tor Inaba N16961) protein is Putative gluconeogenesis factor.